Here is a 397-residue protein sequence, read N- to C-terminus: Glycine betaine/carnitine transport ATP-binding protein GbuA (397 aa).

In terms of domain architecture, ABC transporter spans 28 to 264 (KSKTDILKET…PANEYVEKFI (237 aa)). ATP is bound at residue 60-67 (GLSGSGKS). CBS domains lie at 279-335 (MIRP…NITS) and 340-395 (LHRD…EVNV).

It belongs to the ABC transporter superfamily. As to quaternary structure, the complex is composed of two ATP-binding proteins (GbuA), two transmembrane proteins (GbuB) and a solute-binding protein (GbuC).

It catalyses the reaction a quaternary ammonium(out) + ATP + H2O = a quaternary ammonium(in) + ADP + phosphate + H(+). Its activity is regulated as follows. The complex is activated by an osmotic gradient or by low temperature. Functionally, part of the ABC transporter complex GbuABC involved in glycine betaine uptake. Responsible for energy coupling to the transport system. Involved, with BetL and OpuC, in osmoprotection and cryoprotection of Listeria. Can also uptake carnitine when carnitine is abundant in the growth medium. The sequence is that of Glycine betaine/carnitine transport ATP-binding protein GbuA (gbuA) from Listeria monocytogenes serotype 1/2a (strain 10403S).